Consider the following 1021-residue polypeptide: Collagen alpha-1(I) chain (1021 aa).

The disordered stretch occupies residues 1–1021 (DEKSAGGISV…PGPPGPPGPP (1021 aa)). Position 3 is an allysine (K3). Phosphoserine is present on S4. 4-hydroxyproline is present on residues P23, P26, P29, P38, P41, P44, P59, P74, P80, P89, and P95. The span at 31 to 50 (PQGFQGPPGEPGEPGASGPM) shows a compositional bias: low complexity. Positions 62–76 (NGDDGEAGKPGRPGE) are enriched in basic and acidic residues. 5-hydroxylysine; alternate is present on K98. An O-linked (Gal...) hydroxylysine; alternate glycan is attached at K98. The residue at position 104 (S104) is a Phosphoserine. Residues 112–128 (DAGPAGPKGEPGSPGEN) show a composition bias toward low complexity. Residues P122, P125, P131, P140, P146, P167, P176, P179, P206, P209, P221, P227, P236, P242, P245, and P260 each carry the 4-hydroxyproline modification. Low complexity predominate over residues 146–164 (PGASGPAGARGNDGATGAA). Residues 166–178 (PPGPTGPAGPPGF) show a composition bias toward pro residues. The segment covering 212–262 (AGAAGPAGNPGADGQPGAKGANGAPGIAGAPGFPGARGPSGPQGPSGAPGP) has biased composition (low complexity). K263 carries the 5-hydroxylysine modification. 8 positions are modified to 4-hydroxyproline: P269, P272, P284, P293, P308, P314, P323, and P329. Over residues 318 to 327 (GERGGPGSRG) the composition is skewed to gly residues. The residue at position 338 (K338) is a 5-hydroxylysine. Residues P347, P356, P362, P368, P377, P380, P389, P398, P404, P416, P425, P434, P437, P455, P472, P478, P484, P490, P496, P502, P514, P523, P534, P546, P549, P555, P561, and P570 each carry the 4-hydroxyproline modification. Positions 371–425 (KGLTGSPGSPGPDGKTGPPGPAGQDGRPGPAGPPGARGQAGVMGFPGPKGAAGEP) are enriched in low complexity. A compositionally biased stretch (low complexity) spans 484–493 (PGEAGKPGEQ). The segment covering 536–558 (NDGAKGDAGAPGAPGSQGAPGLQ) has biased composition (low complexity). Position 582 is a 5-hydroxylysine (K582). 4-hydroxyproline occurs at positions 588 and 603. Residues 615 to 629 (AGPSGPAGPTGARGA) show a composition bias toward low complexity. A Phosphoserine modification is found at S618. A 4-hydroxyproline mark is found at P630, P636, P639, P648, P654, P681, and P690. The segment covering 642–672 (AGFAGPPGADGQPGAKGEPGDAGAKGDAGPS) has biased composition (low complexity). A 5-hydroxylysine modification is found at K693. Residues 698-714 (SAGPPGATGFPGAAGRV) show a composition bias toward low complexity. 4-hydroxyproline is present on residues P702 and P708. 3-hydroxyproline is present on P716. P717, P726, P729, P750, P759, P768, P777, P794, P803, P806, P812, P827, P833, P839, P848, and P854 each carry 4-hydroxyproline. A compositionally biased stretch (low complexity) spans 743-752 (ETGPAGRPGE). A compositionally biased stretch (low complexity) spans 762–777 (SGEKGSPGADGPAGAP). A compositionally biased stretch (pro residues) spans 826 to 836 (PPGPMGPPGLA). Low complexity predominate over residues 838 to 853 (PPGEAGREGSPGAEGS). At K863 the chain carries 5-hydroxylysine. Over residues 871-886 (PGPPGAPGAPGAPGPV) the composition is skewed to pro residues. Residues P874, P877, and P880 each carry the 4-hydroxyproline modification. Positions 907-921 (AGPAGARGPAGPQGP) are enriched in low complexity. Over residues 922–936 (RGDKGETGEQGDRGI) the composition is skewed to basic and acidic residues. Residue K925 is modified to 5-hydroxylysine. Residue K937 is modified to 5-hydroxylysine; alternate. K937 carries an O-linked (Gal...) hydroxylysine; alternate glycan. 4 positions are modified to 4-hydroxyproline: P952, P955, P973, and P988. Residues 955-988 (PGEQGPSGASGPAGPRGPPGSAGTPGKDGLNGLP) show a composition bias toward low complexity. P993 is modified (3-hydroxyproline). P994 is modified (4-hydroxyproline). The segment covering 1006–1021 (VGPPGPPGPPGPPGPP) has biased composition (pro residues). A 3-hydroxyproline modification is found at P1008. P1009 is subject to 4-hydroxyproline. At P1011 the chain carries 3-hydroxyproline. P1012 carries the post-translational modification 4-hydroxyproline. 3-hydroxyproline is present on P1014. P1015, P1018, and P1021 each carry 4-hydroxyproline.

Belongs to the fibrillar collagen family. In terms of assembly, trimers of one alpha 2(I) and two alpha 1(I) chains. Post-translationally, contains mostly 4-hydroxyproline. Proline residues at the third position of the tripeptide repeating unit (G-X-Y) are hydroxylated in some or all of the chains. Contains 3-hydroxyproline at a few sites. This modification occurs on the first proline residue in the sequence motif Gly-Pro-Hyp, where Hyp is 4-hydroxyproline. In terms of processing, lysine residues at the third position of the tripeptide repeating unit (G-X-Y) are 5-hydroxylated in some or all of the chains. Post-translationally, O-glycosylated on hydroxylated lysine residues. The O-linked glycan consists of a Glc-Gal disaccharide. Expressed in bones.

The protein localises to the secreted. The protein resides in the extracellular space. Its subcellular location is the extracellular matrix. Functionally, type I collagen is a member of group I collagen (fibrillar forming collagen). This Doedicurus sp. (South American giant glyptodont) protein is Collagen alpha-1(I) chain.